The following is a 326-amino-acid chain: 4-hydroxythreonine-4-phosphate dehydrogenase (326 aa).

Thr-132 is a substrate binding site. Residues His-160, His-205, and His-260 each coordinate a divalent metal cation. Substrate-binding residues include Lys-268, Asn-277, and Arg-286.

Belongs to the PdxA family. Homodimer. It depends on Zn(2+) as a cofactor. Mg(2+) serves as cofactor. Co(2+) is required as a cofactor.

The protein localises to the cytoplasm. It catalyses the reaction 4-(phosphooxy)-L-threonine + NAD(+) = 3-amino-2-oxopropyl phosphate + CO2 + NADH. It participates in cofactor biosynthesis; pyridoxine 5'-phosphate biosynthesis; pyridoxine 5'-phosphate from D-erythrose 4-phosphate: step 4/5. Functionally, catalyzes the NAD(P)-dependent oxidation of 4-(phosphooxy)-L-threonine (HTP) into 2-amino-3-oxo-4-(phosphooxy)butyric acid which spontaneously decarboxylates to form 3-amino-2-oxopropyl phosphate (AHAP). The protein is 4-hydroxythreonine-4-phosphate dehydrogenase of Stenotrophomonas maltophilia (strain R551-3).